Reading from the N-terminus, the 205-residue chain is 3-demethoxyubiquinol 3-hydroxylase (205 aa).

6 residues coordinate Fe cation: glutamate 54, glutamate 84, histidine 87, glutamate 136, glutamate 168, and histidine 171.

This sequence belongs to the COQ7 family. The cofactor is Fe cation.

Its subcellular location is the cell membrane. The enzyme catalyses a 5-methoxy-2-methyl-3-(all-trans-polyprenyl)benzene-1,4-diol + AH2 + O2 = a 3-demethylubiquinol + A + H2O. Its pathway is cofactor biosynthesis; ubiquinone biosynthesis. Its function is as follows. Catalyzes the hydroxylation of 2-nonaprenyl-3-methyl-6-methoxy-1,4-benzoquinol during ubiquinone biosynthesis. In Delftia acidovorans (strain DSM 14801 / SPH-1), this protein is 3-demethoxyubiquinol 3-hydroxylase.